The sequence spans 287 residues: Ret finger protein-like 4A-like protein 1 (287 aa).

The RING-type; degenerate zinc-finger motif lies at 11–53 (CPVCLKDLEEAVQLKCGYACCLQCLNSLQKEPDGEGLLCRFCS). The 199-residue stretch at 78 to 276 (EPKLKSVLTM…LSICSVINPS (199 aa)) folds into the B30.2/SPRY domain.

The protein is Ret finger protein-like 4A-like protein 1 (RFPL4AL1) of Homo sapiens (Human).